Consider the following 346-residue polypeptide: N(4)-(beta-N-acetylglucosaminyl)-L-asparaginase (346 aa).

The first 23 residues, 1–23, serve as a signal peptide directing secretion; that stretch reads MERKSNLSLLLLLLVLGMPLVRG. The N-linked (GlcNAc...) asparagine glycan is linked to Asn-38. 2 disulfides stabilise this stretch: Cys-64-Cys-69 and Cys-163-Cys-179. Thr-206 serves as the catalytic Nucleophile. Residues 234 to 237 and 257 to 260 each bind substrate; these read RVGD and TGDG. Residues Cys-286 and Cys-306 are joined by a disulfide bond. N-linked (GlcNAc...) asparagine glycosylation occurs at Asn-310. Cys-317 and Cys-345 are disulfide-bonded.

The protein belongs to the Ntn-hydrolase family. Heterotetramer of two alpha and two beta chains arranged as a dimer of alpha/beta heterodimers. In terms of processing, cleaved into an alpha and beta chain by autocatalysis; this activates the enzyme. The N-terminal residue of the beta subunit is responsible for the nucleophile hydrolase activity. N-glycosylated.

It localises to the lysosome. It catalyses the reaction N(4)-(beta-N-acetyl-D-glucosaminyl)-L-asparagine + H2O = N-acetyl-beta-D-glucosaminylamine + L-aspartate + H(+). In terms of biological role, cleaves the GlcNAc-Asn bond which joins oligosaccharides to the peptide of asparagine-linked glycoproteins. This is N(4)-(beta-N-acetylglucosaminyl)-L-asparaginase (Aga) from Mus musculus (Mouse).